A 145-amino-acid chain; its full sequence is Acidic phospholipase A2 homolog textilotoxin C chain (145 aa).

A signal peptide spans Met1–Ala19. Positions Ala20–Leu27 are excised as a propeptide. Intrachain disulfides connect Cys38-Cys98, Cys54-Cys144, Cys56-Cys72, Cys71-Cys125, Cys78-Cys118, Cys87-Cys111, and Cys105-Cys116.

Belongs to the phospholipase A2 family. Group I subfamily. D49 sub-subfamily. Heterohexamer. 2 forms exist: 2 A or 2 B chains, 2 C chains and 2 covalently-linked D chains, and 1 A or 1 B, 1 C, 2 covalently-linked D chains and 2 differentially glycosylated covalently-linked D chains. Textilotoxin was originally described as pentameric. As to expression, expressed by the venom gland.

It localises to the secreted. In terms of biological role, snake venom oligomeric phospholipase A2 that has potent presynaptic neurotoxicity. Chain C is not itself neurotoxic, but it is essential for the neurotoxicity of textilotoxin. Chain C possesses a very low phospholipase activity. This chain is Acidic phospholipase A2 homolog textilotoxin C chain, found in Pseudonaja textilis (Eastern brown snake).